Here is a 345-residue protein sequence, read N- to C-terminus: Small ribosomal subunit biogenesis GTPase RsgA (345 aa).

The segment at 1 to 36 is disordered; it reads MSKNKLSKGQERRVQANHQRRLQQRERGAAHWDDQP. Basic and acidic residues predominate over residues 23 to 34; it reads QQRERGAAHWDD. In terms of domain architecture, CP-type G spans 103 to 273; that stretch reads RSVLTRPDVY…LIDSPGVREL (171 aa). Residues 159–162 and 213–221 each bind GTP; these read NKID and GQSGVGKSS. Residues C297, C302, H304, and C310 each coordinate Zn(2+).

The protein belongs to the TRAFAC class YlqF/YawG GTPase family. RsgA subfamily. In terms of assembly, monomer. Associates with 30S ribosomal subunit, binds 16S rRNA. Requires Zn(2+) as cofactor.

The protein localises to the cytoplasm. Its function is as follows. One of several proteins that assist in the late maturation steps of the functional core of the 30S ribosomal subunit. Helps release RbfA from mature subunits. May play a role in the assembly of ribosomal proteins into the subunit. Circularly permuted GTPase that catalyzes slow GTP hydrolysis, GTPase activity is stimulated by the 30S ribosomal subunit. The sequence is that of Small ribosomal subunit biogenesis GTPase RsgA from Sodalis glossinidius (strain morsitans).